The following is a 326-amino-acid chain: Undecaprenyl-phosphate 4-deoxy-4-formamido-L-arabinose transferase (326 aa).

Over 1 to 235 (MFEIHPIKKV…TCLTTTPLRM (235 aa)) the chain is Cytoplasmic. The helical transmembrane segment at 236–256 (LSLLGSIIATSGFSLAILLVV) threads the bilayer. The Periplasmic portion of the chain corresponds to 257-269 (LRLAFGSQWSGEG). Residues 270 to 290 (VFMLFAVLFTFIGAQFIGMGL) traverse the membrane as a helical segment. The Cytoplasmic segment spans residues 291–326 (LGEYIGRIYNDVRARPRYFVQKVIRPASSIDIEENH).

The protein belongs to the glycosyltransferase 2 family.

It is found in the cell inner membrane. It catalyses the reaction UDP-4-deoxy-4-formamido-beta-L-arabinose + di-trans,octa-cis-undecaprenyl phosphate = 4-deoxy-4-formamido-alpha-L-arabinopyranosyl di-trans,octa-cis-undecaprenyl phosphate + UDP. Its pathway is glycolipid biosynthesis; 4-amino-4-deoxy-alpha-L-arabinose undecaprenyl phosphate biosynthesis; 4-amino-4-deoxy-alpha-L-arabinose undecaprenyl phosphate from UDP-4-deoxy-4-formamido-beta-L-arabinose and undecaprenyl phosphate: step 1/2. It functions in the pathway bacterial outer membrane biogenesis; lipopolysaccharide biosynthesis. Catalyzes the transfer of 4-deoxy-4-formamido-L-arabinose from UDP to undecaprenyl phosphate. The modified arabinose is attached to lipid A and is required for resistance to polymyxin and cationic antimicrobial peptides. The polypeptide is Undecaprenyl-phosphate 4-deoxy-4-formamido-L-arabinose transferase (Escherichia fergusonii (strain ATCC 35469 / DSM 13698 / CCUG 18766 / IAM 14443 / JCM 21226 / LMG 7866 / NBRC 102419 / NCTC 12128 / CDC 0568-73)).